A 201-amino-acid polypeptide reads, in one-letter code: 3-isopropylmalate dehydratase small subunit (201 aa).

This sequence belongs to the LeuD family. LeuD type 1 subfamily. In terms of assembly, heterodimer of LeuC and LeuD.

It catalyses the reaction (2R,3S)-3-isopropylmalate = (2S)-2-isopropylmalate. Its pathway is amino-acid biosynthesis; L-leucine biosynthesis; L-leucine from 3-methyl-2-oxobutanoate: step 2/4. In terms of biological role, catalyzes the isomerization between 2-isopropylmalate and 3-isopropylmalate, via the formation of 2-isopropylmaleate. This chain is 3-isopropylmalate dehydratase small subunit, found in Brucella abortus (strain S19).